A 146-amino-acid chain; its full sequence is Snaclec stejaggregin-B subunit beta-1 (146 aa).

The N-terminal stretch at 1-23 is a signal peptide; sequence MGRFIFVSFGLLVVFLSLSGTGA. 3 disulfide bridges follow: Cys25–Cys36, Cys53–Cys142, and Cys119–Cys134. The 112-residue stretch at 32 to 143 folds into the C-type lectin domain; sequence YDLYCYRVFQ…CSQTYPFVCK (112 aa).

This sequence belongs to the snaclec family. As to quaternary structure, heteromultimer; disulfide-linked. As to expression, expressed by the venom gland.

It localises to the secreted. In terms of biological role, interferes with one step of hemostasis (modulation of platelet aggregation, or coagulation cascade, for example). The sequence is that of Snaclec stejaggregin-B subunit beta-1 from Trimeresurus stejnegeri (Chinese green tree viper).